The primary structure comprises 82 residues: Small ribosomal subunit protein bS16 (82 aa).

This sequence belongs to the bacterial ribosomal protein bS16 family.

The polypeptide is Small ribosomal subunit protein bS16 (Francisella tularensis subsp. tularensis (strain FSC 198)).